Reading from the N-terminus, the 147-residue chain is Arginine repressor (147 aa).

It belongs to the ArgR family.

The protein resides in the cytoplasm. It participates in amino-acid biosynthesis; L-arginine biosynthesis [regulation]. Regulates arginine biosynthesis genes. This chain is Arginine repressor, found in Chlamydia caviae (strain ATCC VR-813 / DSM 19441 / 03DC25 / GPIC) (Chlamydophila caviae).